The sequence spans 362 residues: tRNA/tmRNA (uracil-C(5))-methyltransferase (362 aa).

Q182, Y210, N215, E231, and D293 together coordinate S-adenosyl-L-methionine. The Nucleophile role is filled by C318. Residue E352 is the Proton acceptor of the active site.

It belongs to the class I-like SAM-binding methyltransferase superfamily. RNA M5U methyltransferase family. TrmA subfamily.

It carries out the reaction uridine(54) in tRNA + S-adenosyl-L-methionine = 5-methyluridine(54) in tRNA + S-adenosyl-L-homocysteine + H(+). It catalyses the reaction uridine(341) in tmRNA + S-adenosyl-L-methionine = 5-methyluridine(341) in tmRNA + S-adenosyl-L-homocysteine + H(+). Dual-specificity methyltransferase that catalyzes the formation of 5-methyluridine at position 54 (m5U54) in all tRNAs, and that of position 341 (m5U341) in tmRNA (transfer-mRNA). The chain is tRNA/tmRNA (uracil-C(5))-methyltransferase from Neisseria gonorrhoeae (strain ATCC 700825 / FA 1090).